A 209-amino-acid chain; its full sequence is Imidazoleglycerol-phosphate dehydratase (209 aa).

Belongs to the imidazoleglycerol-phosphate dehydratase family.

The protein localises to the cytoplasm. It catalyses the reaction D-erythro-1-(imidazol-4-yl)glycerol 3-phosphate = 3-(imidazol-4-yl)-2-oxopropyl phosphate + H2O. The protein operates within amino-acid biosynthesis; L-histidine biosynthesis; L-histidine from 5-phospho-alpha-D-ribose 1-diphosphate: step 6/9. The chain is Imidazoleglycerol-phosphate dehydratase from Nostoc sp. (strain PCC 7120 / SAG 25.82 / UTEX 2576).